The sequence spans 304 residues: MKYKIIYMGTPHYAREILQTLVEAEDMDVSLVLTQPDRPVGRKKVLTPPPVKVLAQEHGIDVLQPNRLSEEGIKEAIKSQNPDFIIVAAFGQILPQSILDIAPCINLHASLLPQYRGASPVQQSLLNGDEKTGVTSMLMEAGLDTGPMLEKIEFVIPKEMRLFALMEQLTRDACMLTLSTVRNFETITPEAQDESQASLCKKIKKSDGQIDFEDAEIIYNKYRAFEGWPGIFAVNGTKFDEVILLESGTTHTAGEILSFDEESVLVGCSRGALKIGILQPASKKVMTARAYCVGRGKKVGDNIL.

Residue 110–113 (SLLP) participates in (6S)-5,6,7,8-tetrahydrofolate binding.

Belongs to the Fmt family.

The catalysed reaction is L-methionyl-tRNA(fMet) + (6R)-10-formyltetrahydrofolate = N-formyl-L-methionyl-tRNA(fMet) + (6S)-5,6,7,8-tetrahydrofolate + H(+). Functionally, attaches a formyl group to the free amino group of methionyl-tRNA(fMet). The formyl group appears to play a dual role in the initiator identity of N-formylmethionyl-tRNA by promoting its recognition by IF2 and preventing the misappropriation of this tRNA by the elongation apparatus. The sequence is that of Methionyl-tRNA formyltransferase from Sulfurovum sp. (strain NBC37-1).